The chain runs to 340 residues: Lipoate--protein ligase 2 (340 aa).

The BPL/LPL catalytic domain occupies 31-222 (FLDEDILFPY…QILGIDDIKE (192 aa)). ATP-binding positions include R73, 78 to 81 (GAVY), K136, and A140. A (R)-lipoate-binding site is contributed by K136. A coiled-coil region spans residues 293 to 321 (QGDIKDVEEALQGTKMTREDLMHQLKQLD).

This sequence belongs to the LplA family.

It catalyses the reaction L-lysyl-[lipoyl-carrier protein] + (R)-lipoate + ATP = N(6)-[(R)-lipoyl]-L-lysyl-[lipoyl-carrier protein] + AMP + diphosphate + H(+). It functions in the pathway protein modification; protein lipoylation via exogenous pathway; protein N(6)-(lipoyl)lysine from lipoate: step 1/2. Its pathway is protein modification; protein lipoylation via exogenous pathway; protein N(6)-(lipoyl)lysine from lipoate: step 2/2. In terms of biological role, catalyzes specifically the lipoylation of GcvH-L (SAV0324), likely via the ATP-dependent activation of lipoate to lipoyl-AMP and the transfer of the activated lipoyl onto the lipoyl domain of the target protein. Can also utilize lipoamide as substrate for GcvH-L modification. The protein is Lipoate--protein ligase 2 of Staphylococcus aureus (strain Mu50 / ATCC 700699).